Here is a 413-residue protein sequence, read N- to C-terminus: 1-acylglycerol-3-phosphate O-acyltransferase Pnpla3 (413 aa).

The Cytoplasmic portion of the chain corresponds to 1–42 (MYDPERRWSLSFAGCGFLGFYHVGATLCLSERAPHLLRDART). The region spanning 10-179 (LSFAGCGFLG…SDNVPVLDAK (170 aa)) is the PNPLA domain. The short motif at 14–19 (GCGFLG) is the GXGXXG element. Residues 43–63 (FFGCSAGALHAVTFVCSLPLG) form a helical; Signal-anchor for type II membrane protein membrane-spanning segment. The short motif at 45-49 (GCSAG) is the GXSXG element. Ser-47 serves as the catalytic Nucleophile. Topologically, residues 64 to 413 (RIMEILMDLV…HKPQGNSAGL (350 aa)) are lumenal. Asp-166 (proton acceptor) is an active-site residue. A DGA/G motif is present at residues 166–168 (DGG). N-linked (GlcNAc...) asparagine glycans are attached at residues Asn-206 and Asn-209. Residues 389–413 (KDDHRMLKHGHHPSPHKPQGNSAGL) are disordered. Residues 394-403 (MLKHGHHPSP) are compositionally biased toward basic residues.

Restricted to adipose tissue. Expressed in inguinal and epididymal white adipose tissues and in interscapular brown adipose tissue. Also expressed in liver in response to high-sucrose diet.

It is found in the membrane. Its subcellular location is the lipid droplet. The catalysed reaction is a 1-acyl-sn-glycero-3-phosphate + an acyl-CoA = a 1,2-diacyl-sn-glycero-3-phosphate + CoA. It carries out the reaction a triacylglycerol + H2O = a diacylglycerol + a fatty acid + H(+). The enzyme catalyses a 1-acylglycerol + a 1,3-diacylglycerol = a triacylglycerol + glycerol. It catalyses the reaction a 1-acylglycerol + a 1,2-diacylglycerol = a triacylglycerol + glycerol. The catalysed reaction is 2 a 1-acylglycerol = a 1,2-diacylglycerol + glycerol. It carries out the reaction 1-(9Z-octadecenoyl)-sn-glycero-3-phosphate + (9Z)-octadecenoyl-CoA = 1,2-di-(9Z-octadecenoyl)-sn-glycero-3-phosphate + CoA. The enzyme catalyses 1-(9Z-octadecenoyl)-sn-glycero-3-phosphate + hexadecanoyl-CoA = 1-(9Z)-octadecenoyl-2-hexadecanoyl-sn-glycero-3-phosphate + CoA. It catalyses the reaction 1-(9Z-octadecenoyl)-sn-glycero-3-phosphate + (9Z,12Z)-octadecadienoyl-CoA = 1-(9Z)-octadecenoyl-2-(9Z,12Z)-octadecadienoyl-sn-glycero-3-phosphate + CoA. The catalysed reaction is 1-(9Z-octadecenoyl)-sn-glycero-3-phosphate + (5Z,8Z,11Z,14Z)-eicosatetraenoyl-CoA = 1-(9Z)-octadecenoyl-2-(5Z,8Z,11Z,14Z)-eicosatetraenoyl-sn-glycero-3-phosphate + CoA. It carries out the reaction 2 1-(9Z-octadecenoyl)-glycerol = 1,2-di-(9Z-octadecenoyl)-glycerol + glycerol. The enzyme catalyses 1-(9Z-octadecenoyl)-glycerol + 1,2-di-(9Z-octadecenoyl)-glycerol = 1,2,3-tri-(9Z-octadecenoyl)-glycerol + glycerol. It catalyses the reaction 1-(9Z-octadecenoyl)-glycerol + 1,3-di-(9Z-octadecenoyl)-glycerol = 1,2,3-tri-(9Z-octadecenoyl)-glycerol + glycerol. The catalysed reaction is 1,2,3-tri-(9Z-octadecenoyl)-glycerol + H2O = 1,3-di-(9Z-octadecenoyl)-glycerol + (9Z)-octadecenoate + H(+). It carries out the reaction a 1,2-diacyl-sn-glycero-3-phosphocholine + H2O = a 1-acyl-sn-glycero-3-phosphocholine + a fatty acid + H(+). It functions in the pathway phospholipid metabolism. It participates in glycerolipid metabolism. In terms of biological role, specifically catalyzes coenzyme A (CoA)-dependent acylation of 1-acyl-sn-glycerol 3-phosphate (2-lysophosphatidic acid/LPA) to generate phosphatidic acid (PA), an important metabolic intermediate and precursor for both triglycerides and glycerophospholipids. Does not esterify other lysophospholipids. Acyl donors are long chain (at least C16) fatty acyl-CoAs: arachidonoyl-CoA, linoleoyl-CoA, oleoyl-CoA and at a lesser extent palmitoyl-CoA. Additionally possesses low triacylglycerol lipase and CoA-independent acylglycerol transacylase activities and thus may play a role in acyl-chain remodeling of triglycerides. In vitro may express hydrolytic activity against glycerolipids triacylglycerol, diacylglycerol and monoacylglycerol, with a strong preference for oleic acid as the acyl moiety. However, the triacylglycerol hydrolase activity is controversial and may be very low. Possesses phospholipase A2 activity. This is 1-acylglycerol-3-phosphate O-acyltransferase Pnpla3 from Mus musculus (Mouse).